The chain runs to 298 residues: Protoheme IX farnesyltransferase (298 aa).

The next 9 membrane-spanning stretches (helical) occupy residues 19 to 39, 40 to 60, 91 to 111, 112 to 132, 140 to 160, 167 to 187, 213 to 233, 236 to 256, and 277 to 297; these read VMSL…QPVN, PFVA…SGAL, LAVG…GGNW, FAAG…TIWL, IVIG…LPTG, LLMF…LALF, IFAY…TSVG, LYLA…WQIL, and LSLY…WVGG.

Belongs to the UbiA prenyltransferase family. Protoheme IX farnesyltransferase subfamily. Interacts with CtaA.

It localises to the cell inner membrane. It carries out the reaction heme b + (2E,6E)-farnesyl diphosphate + H2O = Fe(II)-heme o + diphosphate. It participates in porphyrin-containing compound metabolism; heme O biosynthesis; heme O from protoheme: step 1/1. In terms of biological role, converts heme B (protoheme IX) to heme O by substitution of the vinyl group on carbon 2 of heme B porphyrin ring with a hydroxyethyl farnesyl side group. This chain is Protoheme IX farnesyltransferase, found in Paracoccus denitrificans.